The primary structure comprises 122 residues: Large ribosomal subunit protein uL14 (122 aa).

Belongs to the universal ribosomal protein uL14 family. As to quaternary structure, part of the 50S ribosomal subunit. Forms a cluster with proteins L3 and L19. In the 70S ribosome, L14 and L19 interact and together make contacts with the 16S rRNA in bridges B5 and B8.

In terms of biological role, binds to 23S rRNA. Forms part of two intersubunit bridges in the 70S ribosome. The sequence is that of Large ribosomal subunit protein uL14 from Staphylococcus carnosus (strain TM300).